The following is a 91-amino-acid chain: DNA-directed RNA polymerase subunit omega (91 aa).

It belongs to the RNA polymerase subunit omega family. In terms of assembly, the RNAP catalytic core consists of 2 alpha, 1 beta, 1 beta' and 1 omega subunit. When a sigma factor is associated with the core the holoenzyme is formed, which can initiate transcription.

It carries out the reaction RNA(n) + a ribonucleoside 5'-triphosphate = RNA(n+1) + diphosphate. In terms of biological role, promotes RNA polymerase assembly. Latches the N- and C-terminal regions of the beta' subunit thereby facilitating its interaction with the beta and alpha subunits. The polypeptide is DNA-directed RNA polymerase subunit omega (Yersinia enterocolitica serotype O:8 / biotype 1B (strain NCTC 13174 / 8081)).